The following is an 848-amino-acid chain: Translation initiation factor IF-2 (848 aa).

The interval 1-265 is disordered; sequence MSDTDGKKPL…GNQRAEKQVR (265 aa). Residues 89 to 162 show a composition bias toward basic and acidic residues; the sequence is KAREVEEAAQ…AEIAKPKTEA (74 aa). The span at 163 to 179 shows a compositional bias: low complexity; it reads RPATPADRAAAEAAAVR. Positions 191 to 219 are enriched in basic and acidic residues; sequence RKTDRDRDTRGGGGDDRDSRNKGRDDSRR. The 169-residue stretch at 346 to 514 folds into the tr-type G domain; it reads PRAPIITIMG…AIALQAEILE (169 aa). The G1 stretch occupies residues 355-362; that stretch reads GHVDHGKT. Position 355–362 (355–362) interacts with GTP; that stretch reads GHVDHGKT. The G2 stretch occupies residues 380–384; sequence GITQH. Residues 402–405 form a G3 region; that stretch reads DTPG. GTP-binding positions include 402 to 406 and 456 to 459; these read DTPGH and NKID. Positions 456-459 are G4; it reads NKID. Positions 492-494 are G5; sequence SAK.

It belongs to the TRAFAC class translation factor GTPase superfamily. Classic translation factor GTPase family. IF-2 subfamily.

It is found in the cytoplasm. In terms of biological role, one of the essential components for the initiation of protein synthesis. Protects formylmethionyl-tRNA from spontaneous hydrolysis and promotes its binding to the 30S ribosomal subunits. Also involved in the hydrolysis of GTP during the formation of the 70S ribosomal complex. The sequence is that of Translation initiation factor IF-2 from Paracoccus denitrificans (strain Pd 1222).